The following is a 58-amino-acid chain: Large ribosomal subunit protein bL32 (58 aa).

This sequence belongs to the bacterial ribosomal protein bL32 family.

This Synechococcus sp. (strain WH7803) protein is Large ribosomal subunit protein bL32.